The sequence spans 269 residues: uncharacterized protein (269 aa).

Residues 52–262 adopt a coiled-coil conformation; that stretch reads KNVYEQLVAT…RKILVESINK (211 aa).

This is an uncharacterized protein from Caenorhabditis elegans.